Reading from the N-terminus, the 155-residue chain is S-ribosylhomocysteine lyase (155 aa).

His54, His58, and Cys122 together coordinate Fe cation.

This sequence belongs to the LuxS family. Homodimer. The cofactor is Fe cation.

The catalysed reaction is S-(5-deoxy-D-ribos-5-yl)-L-homocysteine = (S)-4,5-dihydroxypentane-2,3-dione + L-homocysteine. Involved in the synthesis of autoinducer 2 (AI-2) which is secreted by bacteria and is used to communicate both the cell density and the metabolic potential of the environment. The regulation of gene expression in response to changes in cell density is called quorum sensing. Catalyzes the transformation of S-ribosylhomocysteine (RHC) to homocysteine (HC) and 4,5-dihydroxy-2,3-pentadione (DPD). This is S-ribosylhomocysteine lyase from Deinococcus deserti (strain DSM 17065 / CIP 109153 / LMG 22923 / VCD115).